The chain runs to 2793 residues: Iterative polyketide synthase afoE (2793 aa).

Positions 1–401 (MTRASASGSG…PEKPSFWLTP (401 aa)) are N-terminal acylcarrier protein transacylase domain (SAT). The active-site Nucleophile; for transacylase activity is C157. H279 (proton donor/acceptor; for transacylase activity) is an active-site residue. The Ketosynthase family 3 (KS3) domain occupies 435 to 862 (SEPIAIVGMS…GSNASMIVTQ (428 aa)). Active-site for beta-ketoacyl synthase activity residues include C611, H746, and H785. The malonyl-CoA:ACP transacylase (MAT) stretch occupies residues 977 to 1265 (FGGQISRFVG…SSTITVMAGR (289 aa)). The segment at 1384–1515 (WEFVGYQDDE…ATVEMRSSSD (132 aa)) is N-terminal hotdog fold. Residues 1384-1698 (WEFVGYQDDE…YMRVAKASMS (315 aa)) form the PKS/mFAS DH domain. The product template (PT) domain stretch occupies residues 1411–1696 (YVLSHVIAQT…VQYMRVAKAS (286 aa)). The active-site Proton acceptor; for dehydratase activity is the H1415. The interval 1550–1698 (VEVLQGRNVY…YMRVAKASMS (149 aa)) is C-terminal hotdog fold. D1607 serves as the catalytic Proton donor; for dehydratase activity. Residues 1734 to 1776 (PEVRASSEPGAKVKASKTSKKEKKEKKPVTKAKSKSSKPSGWR) form a disordered region. Residues 1747-1769 (KASKTSKKEKKEKKPVTKAKSKS) show a composition bias toward basic residues. Residues 1776–1850 (RDITEEVRNL…KFVQCVSNAL (75 aa)) form the Carrier domain. S1810 carries the post-translational modification O-(pantetheine 4'-phosphoryl)serine. Positions 1853–1903 (PNAGPAEAEDDEDEEKSDNSSSESASESDDAGSESSDTGILTPTGEEEQPL) are disordered. Residues 1859–1868 (EAEDDEDEEK) show a composition bias toward acidic residues. A methyltransferase domain region spans residues 2115–2294 (NLLAERIGRT…HVDWTDGNLP (180 aa)). The interval 2360–2379 (SRAEKESGKTQAPHAAPGRR) is disordered. Residues 2387 to 2630 (VTGATGSLGS…QWIPVDYCAA (244 aa)) form an NADPH-binding domain region.

It depends on pantetheine 4'-phosphate as a cofactor.

The enzyme catalyses (3E,5E,7S)-5,7-dimethyl-2-oxonona-3,5-dienyl-[ACP] + 4 malonyl-CoA + AH2 + S-adenosyl-L-methionine + 3 H(+) = 6-[(3E,5E,7S)-5,7-dimethyl-2-oxonona-3,5-dienyl]-2,4-dihydroxy-3-methylbenzaldehyde + holo-[ACP] + A + S-adenosyl-L-homocysteine + 4 CO2 + 4 CoA + H2O. It participates in secondary metabolite biosynthesis. In terms of biological role, iterative polyketide synthase; part of the gene cluster that mediates the biosynthesis of asperfuranone, a probable antitumor agent. The polyketide synthase afoG is responsible for producing the 3,5-dimethyloctadienone moiety from acetyl-CoA, three malonyl-CoA, and two S-adenosyl methionines (SAM). The 3,5-dimethyloctadienone moiety is then loaded onto the SAT domain of afoE and extended with four malonyl-CoA and one SAM, which leads to the formation of 2,4-dihydroxy-6-(5,7-dimethyl-2-oxo-trans-3-trans-5-nonadienyl)-3-methylbenzaldehyde (compound 2) after reductive release and aldol condensation. AfoD is the next enzyme in the biosynthesis sequence and hydroxylates the side chain at the benzylic position of compound 2. After benzylic hydroxylation, a furan ring is formed after five-member ring hemiacetal formation and water elimination. AfoF and afoC are proposed to oxidize the R-diketone proton and to reduce the unconjugated carbonyl group, respectively, to generate asperfuranone. Since no intermediates could be isolated from afoF and afoC deletants, the sequence of these two enzymes is not fully understood. Moreover, since afoC deletant still produces a small amount of asperfuranone, other endogenous oxidoreductases might catalyze the same reaction with much less efficiency. This chain is Iterative polyketide synthase afoE, found in Emericella nidulans (strain FGSC A4 / ATCC 38163 / CBS 112.46 / NRRL 194 / M139) (Aspergillus nidulans).